The sequence spans 104 residues: Large ribosomal subunit protein bL21 (104 aa).

This sequence belongs to the bacterial ribosomal protein bL21 family. As to quaternary structure, part of the 50S ribosomal subunit. Contacts protein L20.

This protein binds to 23S rRNA in the presence of protein L20. This is Large ribosomal subunit protein bL21 from Azobacteroides pseudotrichonymphae genomovar. CFP2.